The chain runs to 308 residues: GMP synthase [glutamine-hydrolyzing] subunit B (308 aa).

The GMPS ATP-PPase domain occupies 1-185 (MNWEKFVEEK…LGLPEKIYNR (185 aa)). 28–34 (SGGVDSS) is an ATP binding site.

Heterodimer composed of a glutamine amidotransferase subunit (A) and a GMP-binding subunit (B).

It carries out the reaction XMP + L-glutamine + ATP + H2O = GMP + L-glutamate + AMP + diphosphate + 2 H(+). Its pathway is purine metabolism; GMP biosynthesis; GMP from XMP (L-Gln route): step 1/1. Its function is as follows. Catalyzes the synthesis of GMP from XMP. This is GMP synthase [glutamine-hydrolyzing] subunit B (guaAB) from Pyrococcus abyssi (strain GE5 / Orsay).